A 391-amino-acid polypeptide reads, in one-letter code: NADH-quinone oxidoreductase subunit D (391 aa).

The protein belongs to the complex I 49 kDa subunit family. NDH-1 is composed of 14 different subunits. Subunits NuoB, C, D, E, F, and G constitute the peripheral sector of the complex.

The protein resides in the cell inner membrane. It catalyses the reaction a quinone + NADH + 5 H(+)(in) = a quinol + NAD(+) + 4 H(+)(out). Functionally, NDH-1 shuttles electrons from NADH, via FMN and iron-sulfur (Fe-S) centers, to quinones in the respiratory chain. The immediate electron acceptor for the enzyme in this species is believed to be ubiquinone. Couples the redox reaction to proton translocation (for every two electrons transferred, four hydrogen ions are translocated across the cytoplasmic membrane), and thus conserves the redox energy in a proton gradient. The polypeptide is NADH-quinone oxidoreductase subunit D (Rickettsia bellii (strain OSU 85-389)).